We begin with the raw amino-acid sequence, 101 residues long: Small ribosomal subunit protein uS14 (101 aa).

Belongs to the universal ribosomal protein uS14 family. Part of the 30S ribosomal subunit. Contacts proteins S3 and S10.

Its function is as follows. Binds 16S rRNA, required for the assembly of 30S particles and may also be responsible for determining the conformation of the 16S rRNA at the A site. This chain is Small ribosomal subunit protein uS14, found in Photobacterium profundum (strain SS9).